The sequence spans 148 residues: Large ribosomal subunit protein uL15 (148 aa).

The segment covering M1–G30 has biased composition (basic residues). The tract at residues M1 to L38 is disordered. H39 bears the (3S)-3-hydroxyhistidine mark. 2 positions are modified to N6-acetyllysine: K47 and K55. S68 carries the post-translational modification Phosphoserine. K110 is modified (N6-acetyllysine).

It belongs to the universal ribosomal protein uL15 family. As to quaternary structure, component of the large ribosomal subunit. In terms of processing, hydroxylated on His-39 by MINA.

The protein localises to the cytoplasm. Its function is as follows. Component of the large ribosomal subunit. The ribosome is a large ribonucleoprotein complex responsible for the synthesis of proteins in the cell. The sequence is that of Large ribosomal subunit protein uL15 (RPL27A) from Homo sapiens (Human).